A 306-amino-acid polypeptide reads, in one-letter code: Dermonecrotic toxin LiSicTox-alphaIA1bi (306 aa).

Residues 1 to 18 (MLPYIVLVLGCWSVLSQA) form the signal peptide. Positions 19–26 (AQTDDEER) are excised as a propeptide. Residue H38 is part of the active site. Mg(2+)-binding residues include E58 and D60. Residue H74 is the Nucleophile of the active site. 2 cysteine pairs are disulfide-bonded: C78/C84 and C80/C223. Mg(2+) is bound at residue D118.

Belongs to the arthropod phospholipase D family. Class II subfamily. Class IIa sub-subfamily. Mg(2+) serves as cofactor. Expressed by the venom gland.

It is found in the secreted. The catalysed reaction is an N-(acyl)-sphingosylphosphocholine = an N-(acyl)-sphingosyl-1,3-cyclic phosphate + choline. It catalyses the reaction an N-(acyl)-sphingosylphosphoethanolamine = an N-(acyl)-sphingosyl-1,3-cyclic phosphate + ethanolamine. It carries out the reaction a 1-acyl-sn-glycero-3-phosphocholine = a 1-acyl-sn-glycero-2,3-cyclic phosphate + choline. The enzyme catalyses a 1-acyl-sn-glycero-3-phosphoethanolamine = a 1-acyl-sn-glycero-2,3-cyclic phosphate + ethanolamine. Dermonecrotic toxins cleave the phosphodiester linkage between the phosphate and headgroup of certain phospholipids (sphingolipid and lysolipid substrates), forming an alcohol (often choline) and a cyclic phosphate. This toxin acts on sphingomyelin (SM). The level of enzymatic activity is high according to Tambourgi and colleagues or low according to Felicori and colleagues. It may also act on ceramide phosphoethanolamine (CPE), lysophosphatidylcholine (LPC) and lysophosphatidylethanolamine (LPE), but not on lysophosphatidylserine (LPS), and lysophosphatidylglycerol (LPG). It acts by transphosphatidylation, releasing exclusively cyclic phosphate products as second products. It induces complement-dependent hemolysis, dermonecrosis, vascular permeability and platelet aggregation. Both C5a and the membrane attack complex may play a role in the induction of dermonecrosis. MMP-9 and MMP-2 produced by skin fibroblasts can also contribute to proteolytic tissue destruction. This chain is Dermonecrotic toxin LiSicTox-alphaIA1bi, found in Loxosceles intermedia (Brown spider).